Consider the following 316-residue polypeptide: Putative ring-cleaving dioxygenase MhqA (316 aa).

VOC domains lie at 5–131 (GIHH…LTAD) and 154–278 (GLGP…LSTD). Residues H8, H226, and E274 each coordinate Fe cation.

This sequence belongs to the extradiol ring-cleavage dioxygenase family. Fe(2+) is required as a cofactor.

The protein localises to the cytoplasm. Its function is as follows. Putative ring-cleavage dioxygenase that may contribute to the degradation of aromatic compounds. In Bacillus subtilis (strain 168), this protein is Putative ring-cleaving dioxygenase MhqA (mhqA).